We begin with the raw amino-acid sequence, 89 residues long: HssA/B-like protein 14 (89 aa).

It belongs to the hssA/B family.

The polypeptide is HssA/B-like protein 14 (hssl14) (Dictyostelium discoideum (Social amoeba)).